The following is a 262-amino-acid chain: MPPRVSRFNLPEPAPRVETGTVKAIAVIPARIASTRLPRKILREIDGRTMLDRVYNAAKGAPMLADVIVATDSQEIMDVCNRHGWNARLTSDQHRSGTDRVHEVAQTVAADVYVNVQGDEPLARPEHLNTLLELMRDETVQVGTLKTPCGKEDVANPNAVKVVTDKTGRALYFSRSTVPYDRDNRGDIAYFKHLGFYAYRKPTLDRFCGWPESSLERSERLEQLRFLENGVDIYVAETPYDTIGVDTEADLKRVEEILRSRN.

The protein belongs to the KdsB family.

The protein resides in the cytoplasm. It carries out the reaction 3-deoxy-alpha-D-manno-oct-2-ulosonate + CTP = CMP-3-deoxy-beta-D-manno-octulosonate + diphosphate. The protein operates within nucleotide-sugar biosynthesis; CMP-3-deoxy-D-manno-octulosonate biosynthesis; CMP-3-deoxy-D-manno-octulosonate from 3-deoxy-D-manno-octulosonate and CTP: step 1/1. It participates in bacterial outer membrane biogenesis; lipopolysaccharide biosynthesis. Activates KDO (a required 8-carbon sugar) for incorporation into bacterial lipopolysaccharide in Gram-negative bacteria. In Koribacter versatilis (strain Ellin345), this protein is 3-deoxy-manno-octulosonate cytidylyltransferase.